A 403-amino-acid chain; its full sequence is Ribosomal RNA large subunit methyltransferase I (403 aa).

Residues 9-88 (YPRLVLSKGR…ESIDIAFFTR (80 aa)) enclose the PUA domain.

Belongs to the methyltransferase superfamily. RlmI family.

The protein resides in the cytoplasm. The catalysed reaction is cytidine(1962) in 23S rRNA + S-adenosyl-L-methionine = 5-methylcytidine(1962) in 23S rRNA + S-adenosyl-L-homocysteine + H(+). Specifically methylates the cytosine at position 1962 (m5C1962) of 23S rRNA. The polypeptide is Ribosomal RNA large subunit methyltransferase I (Salmonella newport (strain SL254)).